A 229-amino-acid polypeptide reads, in one-letter code: Putative germin-like protein subfamily 1 member 2 (229 aa).

Residues 1 to 24 (MKGLVQFLVAKIILLVLASTFVHC) form the signal peptide. The cysteines at positions 34 and 50 are disulfide-linked. Asparagine 38 and asparagine 71 each carry an N-linked (GlcNAc...) asparagine glycan. A Cupin type-1 domain is found at 64–215 (SGLNIPGNTS…AFALDVNIVR (152 aa)). Mn(2+) contacts are provided by histidine 112 and histidine 114. Asparagine 139 carries an N-linked (GlcNAc...) asparagine glycan. Histidine 163 contributes to the Mn(2+) binding site.

Belongs to the germin family. Oligomer (believed to be a pentamer but probably hexamer).

Its subcellular location is the secreted. It localises to the extracellular space. The protein localises to the apoplast. In terms of biological role, may play a role in plant defense. Probably has no oxalate oxidase activity even if the active site is conserved. The polypeptide is Putative germin-like protein subfamily 1 member 2 (Arabidopsis thaliana (Mouse-ear cress)).